The primary structure comprises 33 residues: Non-specific lipid-transfer protein (33 aa).

An intrachain disulfide couples Cys14 to Cys29.

Belongs to the plant LTP family. In terms of assembly, dimer.

Functionally, plant non-specific lipid-transfer proteins transfer phospholipids as well as galactolipids across membranes. May play a role in wax or cutin deposition in the cell walls of expanding epidermal cells and certain secretory tissues. Has antibacterial activity against Gram-positive bacteria S.aureus and S.epidermidis and blocks biofilm formation. In a mouse model, also protects against bacterial sepsis and has an anti-inflammatory effect. Exhibits antinociceptive activity upon oral or intraperitoneal application in mice. The chain is Non-specific lipid-transfer protein from Morinda citrifolia (Indian mulberry).